The chain runs to 671 residues: Transcriptional regulator Kaiso (671 aa).

The tract at residues 1–103 is interaction with NCOR1; the sequence is MESRKLISAT…RADLLDELIK (103 aa). A self-association region spans residues 1–136; it reads MESRKLISAT…SGTEQDGTAE (136 aa). Residues 32–94 enclose the BTB domain; it reads CDVTVIVEDR…IYSSKVVRVR (63 aa). The span at 127 to 144 shows a compositional bias: polar residues; the sequence is SGTEQDGTAETLPSSSSD. Residues 127-161 are disordered; the sequence is SGTEQDGTAETLPSSSSDKSLDMEKSKDEAQDNGA. The span at 145 to 156 shows a compositional bias: basic and acidic residues; it reads KSLDMEKSKDEA. Glycyl lysine isopeptide (Lys-Gly) (interchain with G-Cter in SUMO2) cross-links involve residues Lys-151 and Lys-153. Thr-251 is modified (phosphothreonine). Residues 298-571 are interaction with CBFA2T3; it reads LPNHMSSSVN…FMSSHIKSVH (274 aa). The disordered stretch occupies residues 332-365; that stretch reads IIDDDDDIISSSPDSAVSNTSLVPQADNSKSTTL. Over residues 347–365 the composition is skewed to polar residues; it reads AVSNTSLVPQADNSKSTTL. Residues Lys-388, Lys-405, Lys-412, and Lys-447 each participate in a glycyl lysine isopeptide (Lys-Gly) (interchain with G-Cter in SUMO2) cross-link. The span at 451–461 shows a compositional bias: basic and acidic residues; sequence DGGEAKLDNEL. The disordered stretch occupies residues 451 to 474; the sequence is DGGEAKLDNELPKTSGSEPPNKRM. Residues 452–671 are interaction with CTNND1; sequence GGEAKLDNEL…EFEFIIPESY (220 aa). Residues Lys-463, Lys-472, and Lys-477 each participate in a glycyl lysine isopeptide (Lys-Gly) (interchain with G-Cter in SUMO2) cross-link. The Nuclear localization signal motif lies at 469–478; that stretch reads PPNKRMKVKH. 3 consecutive C2H2-type zinc fingers follow at residues 492–514, 520–542, and 548–571; these read YICIVCKRSYVCLTSLRRHFNIH, YQCRYCDKVFPLAEYRTKHEIHH, and YQCLTCGKSFINYQFMSSHIKSVH. A required for DNA-binding region spans residues 512 to 637; sequence NIHSWEKKYQ…TSTPPQNKST (126 aa). Glycyl lysine isopeptide (Lys-Gly) (interchain with G-Cter in SUMO2) cross-links involve residues Lys-537, Lys-568, Lys-580, Lys-609, and Lys-616.

Interacts with NCOR1. Self-associates. Interacts with CTNND1, and this interaction inhibits binding to both methylated and non-methylated DNA. Interacts with CTNND2. Interacts with KPNA2/RCH1, which may mediate nuclear import of this protein. Interacts with CBFA2T3. Expressed in brain, heart, kidney, liver, lung, neuromuscular junctions, skeletal muscle, spleen and testis.

It localises to the nucleus. In terms of biological role, transcriptional regulator with bimodal DNA-binding specificity. Binds to methylated CpG dinucleotides in the consensus sequence 5'-CGCG-3' and also binds to the non-methylated consensus sequence 5'-CTGCNA-3' also known as the consensus kaiso binding site (KBS). May recruit the N-CoR repressor complex to promote histone deacetylation and the formation of repressive chromatin structures in target gene promoters. Contributes to the repression of target genes of the Wnt signaling pathway. May also activate transcription of a subset of target genes by the recruitment of CTNND2. Represses expression of MMP7 in conjunction with transcriptional corepressors CBFA2T3, CBFA2T2 and RUNX1T1. The chain is Transcriptional regulator Kaiso (Zbtb33) from Mus musculus (Mouse).